Here is a 272-residue protein sequence, read N- to C-terminus: Regulatory factor X-associated protein (272 aa).

Disordered regions lie at residues 1–20 (MEAQGVAEGAGPGAASGVPH), 74–142 (LCEG…KTCT), and 175–195 (KKKKSDQALNCGGTASTGSAG). The segment covering 79 to 94 (GDGEEEAGEDEADLLD) has biased composition (acidic residues). Residues 163 to 178 (KKHRNKMYKDKYKKKK) carry the Nuclear localization signal motif. Residue Lys198 forms a Glycyl lysine isopeptide (Lys-Gly) (interchain with G-Cter in SUMO2) linkage. Residues 214–270 (TGSFGDRPARPTLLEQVLNQKRLSLLRSPEVVQFLQKQQQLLNQQVLEQRQQQFPGT) are C-terminal domain.

The RFX heterotetrameric complex consists of 2 molecules of RFX5 and one each of RFXAP and RFX-B/RFXANK; with each subunit representing a separate complementation group. RFX forms cooperative DNA binding complexes with X2BP and CBF/NF-Y. RFX associates with CIITA to form an active transcriptional complex. In terms of processing, phosphorylated. Ubiquitous.

Its subcellular location is the nucleus. Part of the RFX complex that binds to the X-box of MHC II promoters. The sequence is that of Regulatory factor X-associated protein (RFXAP) from Homo sapiens (Human).